Reading from the N-terminus, the 498-residue chain is MTTKKLYFLSISIIILVAISIAIHITLNSNTKTRLTNDSQQQIDTIIEHDLQKGHIPGASILIVKNGKVFLNKGYGYQDVDKKVKASPTTKYEIASNTKAFTGLAILKLAQEGRLNLNDAVSKHVPHFKMNYNGQNETITIKQLLAQTSGIPSDITSEDAVTNKNNRLNDVTRAIMGDELHHKPGEEFEYSNMNYDLLGLIIQNVTKQSYTQYITDHWLKPLQMKHTTFKQTNYKSKHDAIGYELQGSTPVVSKPEFNLWDTPSAYMMTSTEDLEHWIKFQLNPPDKYKSLVQQSHKNLSSTIGEPNANPYASGWFTNNDEHLVFHSGTLDNFSSFILLNPKQNYGIVVLANLNSEYVPKLVEHLNTQIVNHKRYSTVASILNQYKDQFNIVTVLMTTLILLAFIFSAYRAWQMRHGQILLRRSKRIAVLSWLTLCLCIAIALILYALPYLILGSNNWSFVLTWLPIEIKLALITTLIALFSTLIVILLFLHTKITKT.

4 helical membrane passes run Leu6–Thr26, Phe389–Tyr409, Leu433–Leu453, and Leu471–Leu491.

Its subcellular location is the cell membrane. Its function is as follows. Its precise function is unknown. Has no penicillin-binding activity and is not involved in methicillin resistance. The chain is Protein flp (flp) from Staphylococcus aureus (strain MW2).